A 215-amino-acid chain; its full sequence is ATP-dependent dethiobiotin synthetase BioD (215 aa).

Asp-13–Val-18 contacts ATP. A Mg(2+)-binding site is contributed by Thr-17. Lys-38 is an active-site residue. Substrate is bound at residue Thr-42. Residues Asp-50, Glu-115–Gly-118, and Asn-175–His-176 each bind ATP. Mg(2+)-binding residues include Asp-50 and Glu-115.

Belongs to the dethiobiotin synthetase family. Homodimer. Mg(2+) is required as a cofactor.

It is found in the cytoplasm. It carries out the reaction (7R,8S)-7,8-diammoniononanoate + CO2 + ATP = (4R,5S)-dethiobiotin + ADP + phosphate + 3 H(+). It functions in the pathway cofactor biosynthesis; biotin biosynthesis; biotin from 7,8-diaminononanoate: step 1/2. Catalyzes a mechanistically unusual reaction, the ATP-dependent insertion of CO2 between the N7 and N8 nitrogen atoms of 7,8-diaminopelargonic acid (DAPA, also called 7,8-diammoniononanoate) to form a ureido ring. The sequence is that of ATP-dependent dethiobiotin synthetase BioD from Neisseria meningitidis serogroup C / serotype 2a (strain ATCC 700532 / DSM 15464 / FAM18).